The following is an 82-amino-acid chain: DNA-directed RNA polymerase subunit omega (82 aa).

The protein belongs to the RNA polymerase subunit omega family. As to quaternary structure, in cyanobacteria the RNAP catalytic core is composed of 2 alpha, 1 beta, 1 beta', 1 gamma and 1 omega subunit. When a sigma factor is associated with the core the holoenzyme is formed, which can initiate transcription.

It carries out the reaction RNA(n) + a ribonucleoside 5'-triphosphate = RNA(n+1) + diphosphate. Functionally, promotes RNA polymerase assembly. Latches the N- and C-terminal regions of the beta' subunit thereby facilitating its interaction with the beta and alpha subunits. This is DNA-directed RNA polymerase subunit omega from Trichodesmium erythraeum (strain IMS101).